A 511-amino-acid polypeptide reads, in one-letter code: Small ribosomal subunit protein uS4m (511 aa).

The 71-residue stretch at 202–272 folds into the S4 RNA-binding domain; that stretch reads KRLDVVLYRS…IKNNLFSNIN (71 aa).

Belongs to the universal ribosomal protein uS4 family.

The protein resides in the mitochondrion. This Prototheca wickerhamii protein is Small ribosomal subunit protein uS4m (RPS4).